Consider the following 60-residue polypeptide: Large ribosomal subunit protein uL30 (60 aa).

It belongs to the universal ribosomal protein uL30 family. Part of the 50S ribosomal subunit.

The chain is Large ribosomal subunit protein uL30 from Oceanobacillus iheyensis (strain DSM 14371 / CIP 107618 / JCM 11309 / KCTC 3954 / HTE831).